Reading from the N-terminus, the 282-residue chain is E3 ubiquitin-protein ligase SIAH1 (282 aa).

Polar residues predominate over residues 1–17 (MSRQTATALPTGTSKCP). Residues 1–22 (MSRQTATALPTGTSKCPPSQRV) form a disordered region. S19 is subject to Phosphoserine; by ATM and ATR. Residues 41-76 (CPVCFDYVLPPILQCQSGHLVCSNCRPKLTCCPTCR) form an RING-type zinc finger. The segment at 90-282 (VANSVLFPCK…LGINVTISMC (193 aa)) is SBD. Residues 93 to 153 (SVLFPCKYAS…VMPHLMHQHK (61 aa)) form an SIAH-type zinc finger. C98, C105, H117, C121, C128, C135, H147, and H152 together coordinate Zn(2+).

It belongs to the SINA (Seven in absentia) family. As to quaternary structure, homodimer. Component of some large E3 complex composed of UBE2D1, SIAH1, CACYBP/SIP, SKP1, APC and TBL1X. Interacts with UBE2I. Interacts with alpha-tubulin. Interacts with PEG10, which may inhibit its activity. Interacts with PEG3 and HIPK2. Interacts with group 1 glutamate receptors GRM1 and GRM5. Interacts with DAB1, which may inhibit its activity. Interacts with UBE2E2. Interacts with SNCAIP. Interacts with HIPK2; the interaction is promoted by DAZAP2 and results in SIAH1-mediated ubiquitination and subsequent proteasomal degradation of HIPK2. Interacts with DAZAP2; the interaction is decreased following phosphorylation of DAZAP2 by HIPK2. Interacts with GAPDH; leading to stabilize SIAH1. Interacts with Bassoon/BSN and Piccolo/PLCO; these interactions negatively regulate SIAH1 E3 ligase activity. Interacts with DCC. Interacts with AXIN1; catalyzes AXIN1 ubiquitination and subsequent proteasome-mediated ubiquitin-dependent degradation. Phosphorylated on Ser-19 by ATM and ATR. This phosphorylation disrupts SIAH1 interaction with HIPK2, and subsequent proteasomal degradation of HIPK2.

The protein resides in the cytoplasm. The protein localises to the nucleus. The catalysed reaction is S-ubiquitinyl-[E2 ubiquitin-conjugating enzyme]-L-cysteine + [acceptor protein]-L-lysine = [E2 ubiquitin-conjugating enzyme]-L-cysteine + N(6)-ubiquitinyl-[acceptor protein]-L-lysine.. Its pathway is protein modification; protein ubiquitination. E3 ubiquitin-protein ligase that mediates ubiquitination and subsequent proteasomal degradation of target proteins. E3 ubiquitin ligases accept ubiquitin from an E2 ubiquitin-conjugating enzyme in the form of a thioester and then directly transfers the ubiquitin to targeted substrates. Mediates E3 ubiquitin ligase activity either through direct binding to substrates or by functioning as the essential RING domain subunit of larger E3 complexes. Triggers the ubiquitin-mediated degradation of many substrates, including proteins involved in transcription regulation (ELL2, MYB, POU2AF1, PML and RBBP8), a cell surface receptor (DCC), cytoplasmic signal transduction molecules (KLF10/TIEG1 and NUMB), an antiapoptotic protein (BAG1), a microtubule motor protein (KIF22), a protein involved in synaptic vesicle function in neurons (SYP), a structural protein (CTNNB1) and SNCAIP. Confers constitutive instability to HIPK2 through proteasomal degradation. It is thereby involved in many cellular processes such as apoptosis, tumor suppression, cell cycle, axon guidance, transcription, spermatogenesis and TNF-alpha signaling. Has some overlapping function with SIAH2. Induces apoptosis in cooperation with PEG3. Upon nitric oxid (NO) generation that follows apoptotic stimulation, interacts with S-nitrosylated GAPDH, mediating the translocation of GAPDH to the nucleus. GAPDH acts as a stabilizer of SIAH1, facilitating the degradation of nuclear proteins. Mediates ubiquitination and degradation of EGLN2 and EGLN3 in response to the unfolded protein response (UPR), leading to their degradation and subsequent stabilization of ATF4. Also part of the Wnt signaling pathway in which it mediates the Wnt-induced ubiquitin-mediated proteasomal degradation of AXIN1. In Rattus norvegicus (Rat), this protein is E3 ubiquitin-protein ligase SIAH1 (Siah1).